Here is a 121-residue protein sequence, read N- to C-terminus: Phosphoribosyl-AMP cyclohydrolase (121 aa).

Mg(2+) is bound at residue Asp-74. Cys-75 provides a ligand contact to Zn(2+). Residues Asp-76 and Asp-78 each coordinate Mg(2+). 2 residues coordinate Zn(2+): Cys-91 and Cys-98.

The protein belongs to the PRA-CH family. As to quaternary structure, homodimer. Mg(2+) serves as cofactor. Zn(2+) is required as a cofactor.

It is found in the cytoplasm. It carries out the reaction 1-(5-phospho-beta-D-ribosyl)-5'-AMP + H2O = 1-(5-phospho-beta-D-ribosyl)-5-[(5-phospho-beta-D-ribosylamino)methylideneamino]imidazole-4-carboxamide. It participates in amino-acid biosynthesis; L-histidine biosynthesis; L-histidine from 5-phospho-alpha-D-ribose 1-diphosphate: step 3/9. Functionally, catalyzes the hydrolysis of the adenine ring of phosphoribosyl-AMP. The protein is Phosphoribosyl-AMP cyclohydrolase of Methanothrix thermoacetophila (strain DSM 6194 / JCM 14653 / NBRC 101360 / PT) (Methanosaeta thermophila).